A 337-amino-acid chain; its full sequence is Angiopoietin-related protein 7 (337 aa).

An N-terminal signal peptide occupies residues 1 to 21 (MLRETWLCVILVAFVSHPVWL). Residues 30–110 (QLKAAGCCEE…DIMQLQAAQT (81 aa)) adopt a coiled-coil conformation. A glycan (N-linked (GlcNAc...) asparagine) is linked at Asn-49. In terms of domain architecture, Fibrinogen C-terminal spans 113 to 334 (QTSADAIYDC…RVEMKIRPEA (222 aa)). Cys-122 and Cys-153 are joined by a disulfide. N-linked (GlcNAc...) asparagine glycosylation is found at Asn-244 and Asn-258. Residues Cys-276 and Cys-289 are joined by a disulfide bond. N-linked (GlcNAc...) asparagine glycosylation is present at Asn-320.

In terms of assembly, homotetramer; disulfide-linked.

The protein localises to the secreted. In terms of biological role, has a role in the formation and organization of the extracellular matrix. In the eye, it functions as a mediator of dexamethasone-induced matrix deposition in the trabecular meshwork, the tissue responsible for the outflow of the ocular aqueous humor and for the maintenance of intraocular pressure. Is a negative regulator of angiogenesis in the cornea, and plays a major role in maintaining corneal avascularity and transparency. The sequence is that of Angiopoietin-related protein 7 (Angptl7) from Mus musculus (Mouse).